The following is a 707-amino-acid chain: MPGIDKLPIEETLEDSPQTRSLLGVFEEDATAISNYMNQLYQAMHRIYDAQNELSAATHLTSKLLKEYEKQRFPLGGDDEVMSSTLQQFSKVIDELSSCHAVLSTQLADAMMFPISQFKERDLKEILTLKEVFQIASNDHDAAINRYSRLSKKRENDKVKYEVTEDVYTSRKKQHQTMMHYFCALNTLQYKKKIALLEPLLGYMQAQISFFKMGSENLNGQLEEFLANIGTSVQNVRREMDGDVETMQQTIEDLEVASDPLYLPDPDPTKFPINRNLTRKAGYLNARNKTGLVSSTWDRQFYFTQGGNLMSQARGDVAGGLAMDIDNCSVMAVDCEDRRYCFQITSFDGKKSSILQAESKKDHEEWICTINNISKQIYLSENPEETAARVNQSALEAVTPSPSFQQRHESLRPGGQSRPPTARTSSSGSLGSESTNLAALSLDSLVAPDTPIQFDIISPVCEDQPGQAKAFGQGGRRTNPFGESGGSTKSETEDSILHQLFIVRFLGSMEVKSDDHPDVVYETMRQILAARAIHNIFRMTESHLLVTCDCLKLIDPQTQVTRLTFPLPCVVLYATHQENKRLFGFVLRTSGGRSESNLSSVCYIFESNNEGEKICDSVGLAKQIALHAELDRRASEKQKEIERVKEKQQKELSKQKQIEKDLEEQSRLIAASSRPNQAGSEGQLVLSSSQSEESDLGEEGKKRESEA.

A required for RAB5A binding region spans residues 1–428; it reads MPGIDKLPIE…PPTARTSSSG (428 aa). The 266-residue stretch at 3–268 folds into the BAR domain; it reads GIDKLPIEET…DPLYLPDPDP (266 aa). A coiled-coil region spans residues 234-257; sequence QNVRREMDGDVETMQQTIEDLEVA. Positions 277-375 constitute a PH domain; it reads LTRKAGYLNA…WICTINNISK (99 aa). Disordered regions lie at residues 397–433, 466–490, and 636–707; these read AVTP…LGSE, GQAK…STKS, and EKQK…ESEA. Position 399 is a phosphothreonine (T399). Phosphoserine is present on S401. A F&amp;H motif is present at residues 403–414; the sequence is SFQQRHESLRPG. A Phosphoserine; by PKA modification is found at S410. In terms of domain architecture, PID spans 495–655; the sequence is SILHQLFIVR…EKQQKELSKQ (161 aa). Residues 620-670 are a coiled coil; that stretch reads LAKQIALHAELDRRASEKQKEIERVKEKQQKELSKQKQIEKDLEEQSRLIA. Basic and acidic residues predominate over residues 636-666; that stretch reads EKQKEIERVKEKQQKELSKQKQIEKDLEEQS. Low complexity predominate over residues 679–691; the sequence is GSEGQLVLSSSQS. Phosphoserine is present on residues S691 and S694. The span at 698-707 shows a compositional bias: basic and acidic residues; it reads EEGKKRESEA.

In terms of assembly, homodimer. Binds RAB5A/Rab5 through an N-terminal domain. This interaction is essential for its recruitment to endosomal membranes as well as its role in cell proliferation. Binds DCC and the catalytic domain of the inactive form of AKT2 through its PID domain. Binds PIK3CA and subunits of the NuRD/MeCP1 complex. Interacts with OCRL and INPP5B. Interacts with NTRK2. Interacts with APPL2; interaction is independent of follicle stimulating hormone stimulation; interaction is decreased by adiponectin in a time-dependent manner. Forms a complex with APPL2 and RUVBL2. Forms a complex comprising APPL2, RUVBL2, CTNNB1, HDAC1 and HDAC2; interaction reduces interaction between CTNNB1, HDAC1, HDAC2 and RUVBL2 leading to the decrease of deacetylase activity of this complex; affects the recruitment of repressive complexes to the Wnt target genes. Interacts with ANXA2. Interacts with TGFBR1; interaction is TGF beta dependent; mediates trafficking of the TGFBR1 from the endosomes to the nucleus via microtubules in a TRAF6-dependent manner. Interacts with PRKCZ. Interacts with PIK3R1 and APPL2. Interacts with ADIPOR1; ADIPOQ enhances this interaction; inhibites adiponectin-stimulated binding of APPL2 to ADIPOR1. In terms of processing, phosphorylation at Ser-410 by PKA severely impairs binding to OCRL. In terms of tissue distribution, expressed in insulin-target tissues including skeletal muscle, liver, fat, and brain.

It is found in the early endosome membrane. The protein resides in the nucleus. The protein localises to the cytoplasm. Its subcellular location is the endosome. It localises to the cell projection. It is found in the ruffle. The protein resides in the cytoplasmic vesicle. The protein localises to the phagosome. Multifunctional adapter protein that binds to various membrane receptors, nuclear factors and signaling proteins to regulate many processes, such as cell proliferation, immune response, endosomal trafficking and cell metabolism. Regulates signaling pathway leading to cell proliferation through interaction with RAB5A and subunits of the NuRD/MeCP1 complex. Functions as a positive regulator of innate immune response via activation of AKT1 signaling pathway by forming a complex with APPL1 and PIK3R1. Inhibits Fc-gamma receptor-mediated phagocytosis through PI3K/Akt signaling in macrophages. Regulates TLR4 signaling in activated macrophages. Involved in trafficking of the TGFBR1 from the endosomes to the nucleus via microtubules in a TRAF6-dependent manner. Plays a role in cell metabolism by regulating adiponecting and insulin signaling pathways. Required for fibroblast migration through HGF cell signaling. Positive regulator of beta-catenin/TCF-dependent transcription through direct interaction with RUVBL2/reptin resulting in the relief of RUVBL2-mediated repression of beta-catenin/TCF target genes by modulating the interactions within the beta-catenin-reptin-HDAC complex. This Mus musculus (Mouse) protein is DCC-interacting protein 13-alpha.